The following is a 418-amino-acid chain: Glutamyl-tRNA(Gln) amidotransferase subunit D (418 aa).

The 332-residue stretch at lysine 74 to asparagine 405 folds into the Asparaginase/glutaminase domain. Active-site residues include threonine 84, threonine 160, aspartate 161, and lysine 237.

This sequence belongs to the asparaginase 1 family. GatD subfamily. In terms of assembly, heterodimer of GatD and GatE.

The enzyme catalyses L-glutamyl-tRNA(Gln) + L-glutamine + ATP + H2O = L-glutaminyl-tRNA(Gln) + L-glutamate + ADP + phosphate + H(+). Allows the formation of correctly charged Gln-tRNA(Gln) through the transamidation of misacylated Glu-tRNA(Gln) in organisms which lack glutaminyl-tRNA synthetase. The reaction takes place in the presence of glutamine and ATP through an activated gamma-phospho-Glu-tRNA(Gln). The GatDE system is specific for glutamate and does not act on aspartate. This is Glutamyl-tRNA(Gln) amidotransferase subunit D from Methanococcus maripaludis (strain C6 / ATCC BAA-1332).